Consider the following 137-residue polypeptide: Profilin-3 (137 aa).

It belongs to the profilin family. As to quaternary structure, interacts with ACTRT3. As to expression, detected in round spermatids.

It is found in the cytoplasm. The protein resides in the cytoskeleton. The protein localises to the nucleus. Binds to actin and affects the structure of the cytoskeleton. Slightly reduces actin polymerization. Binds to poly-L-proline, phosphatidylinositol 3-phosphate (PtdIns(3)P), phosphatidylinositol 4,5-bisphosphate (PtdIns(4,5)P2), and phosphatidylinositol 4-phosphate (PtdIns(4)P). May be involved in spermatogenesis. This Rattus norvegicus (Rat) protein is Profilin-3 (Pfn3).